The chain runs to 125 residues: MPWRAQDHSVDCLTRSEVYALWAEAVNTLKRNLQVKNVSAHLLEDDAADVKDYIRANLSRFTVITGKCSRRTVCHHHRRVQRTLEPRQDLVNEYACSVTDVYRSPKWSICPTTCTRSRSPTTTPR.

It belongs to the baculoviridae LEF-11 family.

Involved in late/very late gene activation. The protein is Late expression factor 11 (LEF-11) of Orgyia pseudotsugata multicapsid polyhedrosis virus (OpMNPV).